The sequence spans 34 residues: Cytochrome c oxidase polypeptide 2A (34 aa).

Residue Met-1 is modified to N-formylmethionine. Residues 4-34 traverse the membrane as a helical segment; sequence KPKGALAVILVLTLTILVFWLGVYAVFFARG.

The protein resides in the cell membrane. The enzyme catalyses 4 Fe(II)-[cytochrome c] + O2 + 8 H(+)(in) = 4 Fe(III)-[cytochrome c] + 2 H2O + 4 H(+)(out). This chain is Cytochrome c oxidase polypeptide 2A (cbaD), found in Thermus thermophilus (strain ATCC 27634 / DSM 579 / HB8).